An 86-amino-acid chain; its full sequence is ATP synthase epsilon chain (86 aa).

Belongs to the ATPase epsilon chain family. F-type ATPases have 2 components, CF(1) - the catalytic core - and CF(0) - the membrane proton channel. CF(1) has five subunits: alpha(3), beta(3), gamma(1), delta(1), epsilon(1). CF(0) has three main subunits: a, b and c.

It is found in the cell inner membrane. Functionally, produces ATP from ADP in the presence of a proton gradient across the membrane. The sequence is that of ATP synthase epsilon chain (atpC) from Caulobacter vibrioides (strain ATCC 19089 / CIP 103742 / CB 15) (Caulobacter crescentus).